Here is a 505-residue protein sequence, read N- to C-terminus: Proton-coupled zinc antiporter SLC30A1 (505 aa).

The Cytoplasmic segment spans residues 1 to 10; the sequence is MGCWGRNRGR. The helical transmembrane segment at 11–31 threads the bilayer; it reads LLCMLALTFMFMVLEVVVSRV. Topologically, residues 32 to 35 are extracellular; it reads TSSL. Residues 36–56 traverse the membrane as a helical segment; it reads AMLSDSFHMLSDVLALVVALV. His43 and Asp47 together coordinate Zn(2+). Over 57 to 80 the chain is Cytoplasmic; the sequence is AERFARRTHATQKNTFGWIRAEVM. The helical transmembrane segment at 81–101 threads the bilayer; the sequence is GALVNAIFLTGLCFAILLEAI. Topologically, residues 102-113 are extracellular; that stretch reads ERFVEPHEMQQP. The helical transmembrane segment at 114–134 threads the bilayer; that stretch reads LVVLGVGVAGLLVNVLGLCLF. Residues 135-246 are Cytoplasmic-facing; it reads HHHSGFSQDS…RAGQLNMRGV (112 aa). Positions 142–215 are disordered; the sequence is QDSGHSHSHG…DPEKPRSGDT (74 aa). Positions 187 to 199 are enriched in polar residues; that stretch reads TNTLVANTSNSNG. Residues 203–214 are compositionally biased toward basic and acidic residues; that stretch reads DPADPEKPRSGD. The chain crosses the membrane as a helical span at residues 247–267; that stretch reads FLHVLGDALGSVIVVVNALVF. Residues His249 and Asp253 each coordinate Zn(2+). At 268 to 306 the chain is on the extracellular side; it reads YFSWKGCSEGDFCVNPCFPDPCKAFVEIINSTHASVYEA. N-linked (GlcNAc...) asparagine glycosylation occurs at Asn297. The chain crosses the membrane as a helical span at residues 307–327; sequence GPCWVLYLDPTLCVVMVCILL. Topologically, residues 328-505 are cytoplasmic; sequence YTTYPLLKES…MPNKQPESSL (178 aa). At Ser504 the chain carries Phosphoserine.

This sequence belongs to the cation diffusion facilitator (CDF) transporter (TC 2.A.4) family. SLC30A subfamily. As to quaternary structure, homodimer. Interacts with TMEM163. Interacts and forms a complex with TMC6 and TMC8; the interaction regulates zinc transport into the ER.

The protein resides in the cell membrane. It is found in the basolateral cell membrane. The protein localises to the cytoplasmic vesicle membrane. It localises to the cytoplasm. Its subcellular location is the endoplasmic reticulum membrane. The protein resides in the golgi apparatus membrane. It is found in the nucleus membrane. It carries out the reaction Zn(2+)(in) + 2 H(+)(out) = Zn(2+)(out) + 2 H(+)(in). Functionally, zinc ion:proton antiporter that could function at the plasma membrane mediating zinc efflux from cells against its electrochemical gradient protecting them from intracellular zinc accumulation and toxicity. Alternatively, could prevent the transport to the plasma membrane of CACNB2, the L-type calcium channels regulatory subunit, through a yet to be defined mechanism. By modulating the expression of these channels at the plasma membrane, could prevent calcium and zinc influx into cells. By the same mechanism, could also prevent L-type calcium channels-mediated heavy metal influx into cells. In some cells, could also function as a zinc ion:proton antiporter mediating zinc entry into the lumen of cytoplasmic vesicles. In macrophages, can increase zinc ions concentration into the lumen of cytoplasmic vesicles containing engulfed bacteria and could help inactivate them. Forms a complex with TMC6/EVER1 and TMC8/EVER2 at the ER membrane of keratynocytes which facilitates zinc uptake into the ER. Down-regulates the activity of transcription factors induced by zinc and cytokines. In Macaca fascicularis (Crab-eating macaque), this protein is Proton-coupled zinc antiporter SLC30A1.